The following is a 578-amino-acid chain: MASFQIPVINLEVREVKDIVWEKIQEPVNQRRLILVIVSIALLLDNMLYMVIVPIIPDYLREIGSFDDGPTPPPLRDNITGKIIPVHHDHHGQDSATGILFASKAIVQLMVNPFSGGLIDKIGYDLPMMIGLTIMFFSTAVFACGSSYSVLFFARSLQGAGSAFADTAGLAMIADRFTEENERSQALGIALAFISFGCLVAPPFGGALYQFAGKEVPFLILALVCLLDGLMLLLVMKPVKEAMKQSKDVQDQVIPIWRLLMDPYIAVCAGALTMSNVALAFLEPTISLWMEDNMTTDNWKIGMVWLPAFFPHVLGVVITVKMARKYPQHQWLMAAGGLALEGFSCFIIPFCSGYKMLMLPICVICFGIALIDTALLPTLGYLVDVRYVSVYGSIYAIADISYSIAYAVGPIIAGGVVEAIGFTALNFLIAFSNLAYVPVLRKLRNIYDFKPFENEANILMQDPPNKEYQTYVMHDQKPVEGGVKNHLEYGQQYQQEQETNLDDQQYEYQQQQQGYQQGYQQDQGYQPGYQEQGGSYAPQGQPRVANPFQQQQQQQQQQQQQVQSRGPAAPANPFRQGF.

Over 1–32 (MASFQIPVINLEVREVKDIVWEKIQEPVNQRR) the chain is Cytoplasmic. A helical transmembrane segment spans residues 33 to 53 (LILVIVSIALLLDNMLYMVIV). Residues 54-98 (PIIPDYLREIGSFDDGPTPPPLRDNITGKIIPVHHDHHGQDSATG) are Lumenal, vesicle-facing. Asparagine 78 carries an N-linked (GlcNAc...) asparagine glycan. A helical membrane pass occupies residues 99 to 119 (ILFASKAIVQLMVNPFSGGLI). Residues 120–125 (DKIGYD) are Cytoplasmic-facing. The helical transmembrane segment at 126–146 (LPMMIGLTIMFFSTAVFACGS) threads the bilayer. Residues 147–154 (SYSVLFFA) are Lumenal, vesicle-facing. Residues 155 to 175 (RSLQGAGSAFADTAGLAMIAD) form a helical membrane-spanning segment. Over 176-187 (RFTEENERSQAL) the chain is Cytoplasmic. The helical transmembrane segment at 188-208 (GIALAFISFGCLVAPPFGGAL) threads the bilayer. Residues 209 to 215 (YQFAGKE) lie on the Lumenal, vesicle side of the membrane. Residues 216–236 (VPFLILALVCLLDGLMLLLVM) traverse the membrane as a helical segment. Residues 237–263 (KPVKEAMKQSKDVQDQVIPIWRLLMDP) are Cytoplasmic-facing. Residues 264–284 (YIAVCAGALTMSNVALAFLEP) traverse the membrane as a helical segment. Residues 285–299 (TISLWMEDNMTTDNW) lie on the Lumenal, vesicle side of the membrane. Residue asparagine 293 is glycosylated (N-linked (GlcNAc...) asparagine). The chain crosses the membrane as a helical span at residues 300 to 320 (KIGMVWLPAFFPHVLGVVITV). Residues 321–330 (KMARKYPQHQ) are Cytoplasmic-facing. A helical membrane pass occupies residues 331 to 351 (WLMAAGGLALEGFSCFIIPFC). At 352–355 (SGYK) the chain is on the lumenal, vesicle side. The helical transmembrane segment at 356-376 (MLMLPICVICFGIALIDTALL) threads the bilayer. At 377 to 387 (PTLGYLVDVRY) the chain is on the cytoplasmic side. Residues 388 to 408 (VSVYGSIYAIADISYSIAYAV) form a helical membrane-spanning segment. Over 409–413 (GPIIA) the chain is Lumenal, vesicle. The chain crosses the membrane as a helical span at residues 414-434 (GGVVEAIGFTALNFLIAFSNL). Over 435 to 578 (AYVPVLRKLR…APANPFRQGF (144 aa)) the chain is Cytoplasmic. 2 stretches are compositionally biased toward low complexity: residues 507 to 534 (EYQQ…EQGG) and 549 to 563 (QQQQ…QQVQ). A disordered region spans residues 507–578 (EYQQQQQGYQ…APANPFRQGF (72 aa)).

The protein belongs to the major facilitator superfamily. Vesicular transporter family.

The protein resides in the membrane. Its function is as follows. Involved in acetylcholine transport into synaptic vesicles. The protein is Vesicular acetylcholine transporter (VAChT) of Drosophila melanogaster (Fruit fly).